A 129-amino-acid chain; its full sequence is Fluoride-specific ion channel FluC (129 aa).

Helical transmembrane passes span 4-24 (LFVAAGGALGSTLRYWLSGLI), 32-52 (FPWGTLVINISGSIVIGAFAT), 69-89 (FFMVGVCGGYTTFSSFSLQTL), and 105-125 (VLSVVFCLIGVWLGHVGAVLI). Residues G76 and T79 each coordinate Na(+).

This sequence belongs to the fluoride channel Fluc/FEX (TC 1.A.43) family.

Its subcellular location is the cell inner membrane. It catalyses the reaction fluoride(in) = fluoride(out). Na(+) is not transported, but it plays an essential structural role and its presence is essential for fluoride channel function. Its function is as follows. Fluoride-specific ion channel. Important for reducing fluoride concentration in the cell, thus reducing its toxicity. In Rhodospirillum rubrum (strain ATCC 11170 / ATH 1.1.1 / DSM 467 / LMG 4362 / NCIMB 8255 / S1), this protein is Fluoride-specific ion channel FluC.